A 90-amino-acid polypeptide reads, in one-letter code: Cytochrome c7 (90 aa).

The first 20 residues, 1–20 (MKRIIASLALSVFCAGLAFA), serve as a signal peptide directing secretion. Positions 37, 40, 47, 50, 51, 67, 70, 73, 74, 84, 87, and 88 each coordinate heme.

Binds 3 heme groups per subunit.

Functionally, may be involved in anaerobic iron respiration. The polypeptide is Cytochrome c7 (Geobacter metallireducens (strain ATCC 53774 / DSM 7210 / GS-15)).